The chain runs to 172 residues: SsrA-binding protein (172 aa).

It belongs to the SmpB family.

The protein localises to the cytoplasm. Functionally, required for rescue of stalled ribosomes mediated by trans-translation. Binds to transfer-messenger RNA (tmRNA), required for stable association of tmRNA with ribosomes. tmRNA and SmpB together mimic tRNA shape, replacing the anticodon stem-loop with SmpB. tmRNA is encoded by the ssrA gene; the 2 termini fold to resemble tRNA(Ala) and it encodes a 'tag peptide', a short internal open reading frame. During trans-translation Ala-aminoacylated tmRNA acts like a tRNA, entering the A-site of stalled ribosomes, displacing the stalled mRNA. The ribosome then switches to translate the ORF on the tmRNA; the nascent peptide is terminated with the 'tag peptide' encoded by the tmRNA and targeted for degradation. The ribosome is freed to recommence translation, which seems to be the essential function of trans-translation. The chain is SsrA-binding protein from Dehalococcoides mccartyi (strain CBDB1).